The following is a 204-amino-acid chain: Thymidylate kinase (204 aa).

11-18 (GLDKSGKT) contributes to the ATP binding site.

This sequence belongs to the thymidylate kinase family.

The catalysed reaction is dTMP + ATP = dTDP + ADP. The protein operates within pyrimidine metabolism; dTTP biosynthesis. The chain is Thymidylate kinase (TMK) from Bos taurus (Bovine).